The following is a 293-amino-acid chain: Acetyl-coenzyme A carboxylase carboxyl transferase subunit beta (293 aa).

The CoA carboxyltransferase N-terminal domain occupies 29-293; that stretch reads LWVKCPECGQ…GCKAKKAAGK (265 aa). 4 residues coordinate Zn(2+): C33, C36, C52, and C55. The segment at 33-55 adopts a C4-type zinc-finger fold; it reads CPECGQVVYRKDLHANASVCSNC.

This sequence belongs to the AccD/PCCB family. Acetyl-CoA carboxylase is a heterohexamer composed of biotin carboxyl carrier protein (AccB), biotin carboxylase (AccC) and two subunits each of ACCase subunit alpha (AccA) and ACCase subunit beta (AccD). Zn(2+) serves as cofactor.

The protein resides in the cytoplasm. It catalyses the reaction N(6)-carboxybiotinyl-L-lysyl-[protein] + acetyl-CoA = N(6)-biotinyl-L-lysyl-[protein] + malonyl-CoA. The protein operates within lipid metabolism; malonyl-CoA biosynthesis; malonyl-CoA from acetyl-CoA: step 1/1. Component of the acetyl coenzyme A carboxylase (ACC) complex. Biotin carboxylase (BC) catalyzes the carboxylation of biotin on its carrier protein (BCCP) and then the CO(2) group is transferred by the transcarboxylase to acetyl-CoA to form malonyl-CoA. This Prochlorococcus marinus (strain MIT 9303) protein is Acetyl-coenzyme A carboxylase carboxyl transferase subunit beta.